Here is a 111-residue protein sequence, read N- to C-terminus: Probable 4-amino-4-deoxy-L-arabinose-phosphoundecaprenol flippase subunit ArnE (111 aa).

The next 3 membrane-spanning stretches (helical) occupy residues 38 to 58, 61 to 81, and 89 to 109; these read LWLG…LLVL, LPVG…TLAA, and VLPR…ILGS. Residues 40 to 109 enclose the EamA domain; it reads LGLALICMGA…IISGIIILGS (70 aa).

The protein belongs to the ArnE family. As to quaternary structure, heterodimer of ArnE and ArnF.

The protein localises to the cell inner membrane. It participates in bacterial outer membrane biogenesis; lipopolysaccharide biosynthesis. Its function is as follows. Translocates 4-amino-4-deoxy-L-arabinose-phosphoundecaprenol (alpha-L-Ara4N-phosphoundecaprenol) from the cytoplasmic to the periplasmic side of the inner membrane. This is Probable 4-amino-4-deoxy-L-arabinose-phosphoundecaprenol flippase subunit ArnE from Salmonella paratyphi A (strain ATCC 9150 / SARB42).